Reading from the N-terminus, the 193-residue chain is Holliday junction branch migration complex subunit RuvA (193 aa).

The interval 1–63 (MIAHIQGKLV…EDSHSLYGFA (63 aa)) is domain I. Residues 64–142 (EKSEKEIFKL…KLYDLDQVSI (79 aa)) are domain II. The segment at 143–145 (SQS) is flexible linker. Residues 145–193 (SNTNKDEALSALEVLGFIRKSAEKVVEKIVATMPDATVETIIKQALKNL) form a domain III region.

Belongs to the RuvA family. In terms of assembly, homotetramer. Forms an RuvA(8)-RuvB(12)-Holliday junction (HJ) complex. HJ DNA is sandwiched between 2 RuvA tetramers; dsDNA enters through RuvA and exits via RuvB. An RuvB hexamer assembles on each DNA strand where it exits the tetramer. Each RuvB hexamer is contacted by two RuvA subunits (via domain III) on 2 adjacent RuvB subunits; this complex drives branch migration. In the full resolvosome a probable DNA-RuvA(4)-RuvB(12)-RuvC(2) complex forms which resolves the HJ.

It localises to the cytoplasm. Functionally, the RuvA-RuvB-RuvC complex processes Holliday junction (HJ) DNA during genetic recombination and DNA repair, while the RuvA-RuvB complex plays an important role in the rescue of blocked DNA replication forks via replication fork reversal (RFR). RuvA specifically binds to HJ cruciform DNA, conferring on it an open structure. The RuvB hexamer acts as an ATP-dependent pump, pulling dsDNA into and through the RuvAB complex. HJ branch migration allows RuvC to scan DNA until it finds its consensus sequence, where it cleaves and resolves the cruciform DNA. In Flavobacterium psychrophilum (strain ATCC 49511 / DSM 21280 / CIP 103535 / JIP02/86), this protein is Holliday junction branch migration complex subunit RuvA.